The primary structure comprises 416 residues: Gamma-glutamyl phosphate reductase (416 aa).

It belongs to the gamma-glutamyl phosphate reductase family.

It localises to the cytoplasm. The catalysed reaction is L-glutamate 5-semialdehyde + phosphate + NADP(+) = L-glutamyl 5-phosphate + NADPH + H(+). The protein operates within amino-acid biosynthesis; L-proline biosynthesis; L-glutamate 5-semialdehyde from L-glutamate: step 2/2. Its function is as follows. Catalyzes the NADPH-dependent reduction of L-glutamate 5-phosphate into L-glutamate 5-semialdehyde and phosphate. The product spontaneously undergoes cyclization to form 1-pyrroline-5-carboxylate. The sequence is that of Gamma-glutamyl phosphate reductase from Streptococcus pyogenes serotype M49 (strain NZ131).